The chain runs to 333 residues: Geminin coiled-coil domain-containing protein 1 (333 aa).

Positions 83–118 (QLYRNKQLQDTLLQKEEELARLHEENNHLRQYLNST) form a coiled coil. Positions 145-154 (KEKRKPKEHR) are enriched in basic residues. The segment at 145–165 (KEKRKPKEHRHSPAEIPQFKT) is disordered.

The protein belongs to the GEMC1 family. In terms of processing, highly phosphorylated by CDK2; stimulates initiation of DNA replication.

The protein resides in the nucleus. Regulator of DNA replication. Promotes initiation of chromosomal DNA replication by mediating TOPBP1- and CDK2-dependent recruitment of CDC45L onto replication origins. This is Geminin coiled-coil domain-containing protein 1 (Gmnc) from Mus musculus (Mouse).